A 511-amino-acid chain; its full sequence is Maturase K (511 aa).

This sequence belongs to the intron maturase 2 family. MatK subfamily.

The protein localises to the plastid. It localises to the chloroplast. In terms of biological role, usually encoded in the trnK tRNA gene intron. Probably assists in splicing its own and other chloroplast group II introns. This is Maturase K from Diplacus aurantiacus (Orange bush monkey flower).